Reading from the N-terminus, the 2359-residue chain is Nonribosomal peptide synthetase anaPS (2359 aa).

Positions 239–633 (RNATVHGDTL…VRRKDNQVKI (395 aa)) are adenylation 1. The 77-residue stretch at 770–846 (AAQGKGEEAI…ELASAANLSN (77 aa)) folds into the Carrier 1 domain. Serine 807 is modified (O-(pantetheine 4'-phosphoryl)serine). Positions 883 to 1292 (EDIYPSTALQ…VGDLPRMSRQ (410 aa)) are condensation 1. Residues 1321-1709 (LEYPNACAVS…GRKDSQIKIR (389 aa)) form an adenylation 2 region. The Carrier 2 domain occupies 1842–1918 (APSNSVEQDL…AIANKIGVVS (77 aa)). O-(pantetheine 4'-phosphoryl)serine is present on serine 1879. Residues 1936–2356 (LTPIQEFFFE…LVKCLEDLAS (421 aa)) form a condensation 2 region.

The protein belongs to the NRP synthetase family.

The enzyme catalyses anthranilate + L-tryptophan + 2 ATP = (R)-benzodiazepinedione + 2 AMP + 2 diphosphate + H(+). The protein operates within alkaloid biosynthesis. Its function is as follows. Nonribosomal peptide synthetase; part of the gene cluster that mediates the biosynthesis of the prenylated pyrroloindoline diketopiperazine acetylaszonalenin. The first step in the pathway is the formation of (R)-benzodiazepinedione by condensation of tryptophan and anthranilic acid catalyzed by the non-ribosomal peptide synthetase anaPS. The prenyltransferase anaPT then converts (R)-benzodiazepinedione to aszonalenin in the presence of dimethylallyl diphosphate (DMAPP) via C3-prenylation. The last step in the biosynthesis of acetylaszonalenin via acetylation of aszonalenin at position N1 catalyzed by anaAT. This Neosartorya fischeri (strain ATCC 1020 / DSM 3700 / CBS 544.65 / FGSC A1164 / JCM 1740 / NRRL 181 / WB 181) (Aspergillus fischerianus) protein is Nonribosomal peptide synthetase anaPS.